Reading from the N-terminus, the 123-residue chain is Integration host factor subunit alpha (123 aa).

A disordered region spans residues 97–123 (NANGSAPSMSSSASAVDDDKSESASRT). The segment covering 98–111 (ANGSAPSMSSSASA) has biased composition (low complexity). Positions 113–123 (DDDKSESASRT) are enriched in basic and acidic residues.

It belongs to the bacterial histone-like protein family. As to quaternary structure, heterodimer of an alpha and a beta chain.

In terms of biological role, this protein is one of the two subunits of integration host factor, a specific DNA-binding protein that functions in genetic recombination as well as in transcriptional and translational control. This is Integration host factor subunit alpha from Rhodopseudomonas palustris (strain BisB5).